We begin with the raw amino-acid sequence, 440 residues long: F-box protein pof12 (440 aa).

The 47-residue stretch at 8-54 (KNPASIFSHETLLHVLNDLSAHDLAALERVSRSWNSIVRRSSVWHNL) folds into the F-box domain.

In terms of assembly, interacts with skp1.

The protein resides in the nucleus. The polypeptide is F-box protein pof12 (pof12) (Schizosaccharomyces pombe (strain 972 / ATCC 24843) (Fission yeast)).